The chain runs to 357 residues: 3-isopropylmalate dehydrogenase (357 aa).

Position 76–89 (76–89) interacts with NAD(+); the sequence is GPQWDTIDPSLRPE. Substrate is bound by residues Arg-96, Arg-106, Arg-134, and Asp-224. Positions 224, 248, and 252 each coordinate Mg(2+). 282-294 contacts NAD(+); that stretch reads GSAPDIAGKGIAN.

This sequence belongs to the isocitrate and isopropylmalate dehydrogenases family. LeuB type 1 subfamily. As to quaternary structure, homodimer. Mg(2+) is required as a cofactor. Mn(2+) serves as cofactor.

The protein localises to the cytoplasm. The catalysed reaction is (2R,3S)-3-isopropylmalate + NAD(+) = 4-methyl-2-oxopentanoate + CO2 + NADH. The protein operates within amino-acid biosynthesis; L-leucine biosynthesis; L-leucine from 3-methyl-2-oxobutanoate: step 3/4. Catalyzes the oxidation of 3-carboxy-2-hydroxy-4-methylpentanoate (3-isopropylmalate) to 3-carboxy-4-methyl-2-oxopentanoate. The product decarboxylates to 4-methyl-2 oxopentanoate. This is 3-isopropylmalate dehydrogenase from Xanthomonas oryzae pv. oryzae (strain MAFF 311018).